A 183-amino-acid chain; its full sequence is Pyruvoyl-dependent arginine decarboxylase 2 (183 aa).

At Ser41 the chain carries Pyruvic acid (Ser).

It belongs to the PdaD family. It depends on pyruvate as a cofactor.

The catalysed reaction is L-arginine + H(+) = agmatine + CO2. The chain is Pyruvoyl-dependent arginine decarboxylase 2 (pdaD2) from Methanosarcina acetivorans (strain ATCC 35395 / DSM 2834 / JCM 12185 / C2A).